A 272-amino-acid chain; its full sequence is Undecaprenyl-diphosphatase (272 aa).

The next 8 helical transmembrane spans lie at 4–24, 43–63, 86–106, 109–129, 145–165, 186–206, 222–242, and 249–269; these read FEVI…FLPI, GGRV…CWLY, ISVL…VDFI, VLFS…IIFW, ITFK…IPGT, TEFS…FDLI, VGFV…VLFV, and VFAW…MFFN.

The protein belongs to the UppP family.

It is found in the cell inner membrane. The catalysed reaction is di-trans,octa-cis-undecaprenyl diphosphate + H2O = di-trans,octa-cis-undecaprenyl phosphate + phosphate + H(+). Catalyzes the dephosphorylation of undecaprenyl diphosphate (UPP). Confers resistance to bacitracin. This is Undecaprenyl-diphosphatase from Acinetobacter baumannii (strain AB307-0294).